Here is a 491-residue protein sequence, read N- to C-terminus: Ketol-acid reductoisomerase (NADP(+)) (491 aa).

One can recognise a KARI N-terminal Rossmann domain in the interval 15–208; the sequence is AQLGKCRFMA…GGHRAGVLES (194 aa). Residues 45 to 48, R68, R76, S78, and 108 to 110 each bind NADP(+); these read CGAQ and DKQ. H132 is an active-site residue. Residue G158 participates in NADP(+) binding. KARI C-terminal knotted domains follow at residues 209-344 and 345-484; these read SFVA…TASQ and FDGK…MKDM. Mg(2+) is bound by residues D217, E221, E389, and E393. A substrate-binding site is contributed by S414.

Belongs to the ketol-acid reductoisomerase family. The cofactor is Mg(2+).

The enzyme catalyses (2R)-2,3-dihydroxy-3-methylbutanoate + NADP(+) = (2S)-2-acetolactate + NADPH + H(+). The catalysed reaction is (2R,3R)-2,3-dihydroxy-3-methylpentanoate + NADP(+) = (S)-2-ethyl-2-hydroxy-3-oxobutanoate + NADPH + H(+). Its pathway is amino-acid biosynthesis; L-isoleucine biosynthesis; L-isoleucine from 2-oxobutanoate: step 2/4. It participates in amino-acid biosynthesis; L-valine biosynthesis; L-valine from pyruvate: step 2/4. Functionally, involved in the biosynthesis of branched-chain amino acids (BCAA). Catalyzes an alkyl-migration followed by a ketol-acid reduction of (S)-2-acetolactate (S2AL) to yield (R)-2,3-dihydroxy-isovalerate. In the isomerase reaction, S2AL is rearranged via a Mg-dependent methyl migration to produce 3-hydroxy-3-methyl-2-ketobutyrate (HMKB). In the reductase reaction, this 2-ketoacid undergoes a metal-dependent reduction by NADPH to yield (R)-2,3-dihydroxy-isovalerate. This chain is Ketol-acid reductoisomerase (NADP(+)), found in Enterobacter sp. (strain 638).